Reading from the N-terminus, the 232-residue chain is Pseudaminic acid cytidylyltransferase (232 aa).

Belongs to the CMP-NeuNAc synthase family. Requires Mg(2+) as cofactor.

The enzyme catalyses pseudaminate + CTP = CMP-pseudaminate + diphosphate. Catalyzes the final step in the biosynthesis of pseudaminic acid, a sialic-acid-like sugar that is used to modify flagellin. Mediates the activation of pseudaminic acid with CMP by forming CMP-pseudaminic acid. In Campylobacter jejuni subsp. jejuni serotype O:2 (strain ATCC 700819 / NCTC 11168), this protein is Pseudaminic acid cytidylyltransferase (pseF).